We begin with the raw amino-acid sequence, 234 residues long: Carbohydrate deacetylase (234 aa).

Mg(2+)-binding residues include histidine 60 and histidine 123.

The protein belongs to the YdjC deacetylase family. Mg(2+) is required as a cofactor.

In terms of biological role, probably catalyzes the deacetylation of acetylated carbohydrates an important step in the degradation of oligosaccharides. In Bacillus anthracis, this protein is Carbohydrate deacetylase.